The following is a 235-amino-acid chain: MTQQFYVSPEQLMKDRADFARKGIARGRSVVVISCEEGIALVAENPSPSLHKIGEIYDKIAFAAVGKYNEFESLRQAGVRYADVRGYSYDREDVTARGLASVYAQSLGAVFTAEQKPFEVELAVAEVGGNQSDDHLYRLTFDGSIADEKRFIVMGGQADKVAETVEGGWQQELNFAGAIRLAMKGLVTDKEAGELPASALEVAVLDRASESTRGSRRAFRRLGDDEIAALLSKEN.

This sequence belongs to the peptidase T1A family. The 20S proteasome core is composed of 14 alpha and 14 beta subunits that assemble into four stacked heptameric rings, resulting in a barrel-shaped structure. The two inner rings, each composed of seven catalytic beta subunits, are sandwiched by two outer rings, each composed of seven alpha subunits. The catalytic chamber with the active sites is on the inside of the barrel. Has a gated structure, the ends of the cylinder being occluded by the N-termini of the alpha-subunits. Is capped by the proteasome-associated ATPase, ARC.

The protein resides in the cytoplasm. It participates in protein degradation; proteasomal Pup-dependent pathway. With respect to regulation, the formation of the proteasomal ATPase ARC-20S proteasome complex, likely via the docking of the C-termini of ARC into the intersubunit pockets in the alpha-rings, may trigger opening of the gate for substrate entry. Interconversion between the open-gate and close-gate conformations leads to a dynamic regulation of the 20S proteasome proteolysis activity. Its function is as follows. Component of the proteasome core, a large protease complex with broad specificity involved in protein degradation. In Arthrobacter sp. (strain FB24), this protein is Proteasome subunit alpha.